Reading from the N-terminus, the 613-residue chain is Pentatricopeptide repeat-containing protein At2g45350, chloroplastic (613 aa).

PPR repeat units lie at residues 85-119 (DPFL…GVSV), 120-154 (DKFS…GLWS), 155-185 (DLFL…MPKR), 186-216 (DSVS…MPME), 219-250 (NLIS…MPEK), 251-285 (DLIS…DVVT), 286-312 (WATM…MPHR), 313-347 (DVVA…SHLL), 349-383 (DDTT…QFYL), 384-414 (GGKL…IENK), 415-449 (SIDH…SLKP), 450-480 (DDIT…MRRK), and 486-516 (RLQH…MPVE). The interval 521–596 (IWRTFLTACS…IPGCSWIELD (76 aa)) is type E motif.

Belongs to the PPR family. PCMP-E subfamily. As to quaternary structure, interacts with DYW1.

It is found in the plastid. The protein resides in the chloroplast. In terms of biological role, plays a major role in chloroplast RNA editing. Acts as a site-recognition transacting factor to recruit C-deaminase. Involved in single RNA editing events. Required for the edition of the site 1 of ndhD (ndhD-1 site corresponding to cytidine-2), which is a plastid-encoded subunit of the NADH-plastoquinone oxidoreductase. The interaction with DYW1 is required for its function in editing the ndhD-1 site. This Arabidopsis thaliana (Mouse-ear cress) protein is Pentatricopeptide repeat-containing protein At2g45350, chloroplastic (CRR4).